The following is a 312-amino-acid chain: Methionyl-tRNA formyltransferase (312 aa).

112 to 115 (SLLP) provides a ligand contact to (6S)-5,6,7,8-tetrahydrofolate.

It belongs to the Fmt family.

It carries out the reaction L-methionyl-tRNA(fMet) + (6R)-10-formyltetrahydrofolate = N-formyl-L-methionyl-tRNA(fMet) + (6S)-5,6,7,8-tetrahydrofolate + H(+). In terms of biological role, attaches a formyl group to the free amino group of methionyl-tRNA(fMet). The formyl group appears to play a dual role in the initiator identity of N-formylmethionyl-tRNA by promoting its recognition by IF2 and preventing the misappropriation of this tRNA by the elongation apparatus. This chain is Methionyl-tRNA formyltransferase, found in Magnetococcus marinus (strain ATCC BAA-1437 / JCM 17883 / MC-1).